The chain runs to 1207 residues: MIDVNNFHYMKIGLASPEKIRSWSFGEVKKPETINYRTLKPEKDGLFCERIFGPTKDWECSCGKYKRVRYKGMVCDRCGVEVTKSKVRRERMGHIELAAPVSHIWYFKGIPSRMGLLLDMSPRALEEVIYFASYVVVDPGPTGLEKKTLLSEAEFRDYYDKYPGQFVAKMGAEGIKDLLEEIDLDEELKLLRDELESATGQRLTRAIKRLEVVESFRNSGNKPSWMILDVLPIIPPEIRPMVQLDGGRFATSDLNDLYRRVINRNNRLKRLLDLGAPGIIVQNEKRMLQEAVDALIDNGRRGRPVTGPGNRPLKSLSHMLKGKQGRFRQNLLGKRVDYSGRSVIAVGPSLKMYQCGLPKEMALELFKPFVMKELVQREIATNIKNAKSKIERMDDEVWDVLEEVIREHPVLLNRAPTLHRLGIQAFEPTLVEGRAIRLHPLVTTAYNADFDGDQMAVHVPLSKEAQAEARMLMLAAQNILNPKDGKPVVTPSQDMVLGNYYLTLERKDAVNTGAIFNNTNEVLKAYANGFVHLHTRIGVHASSFNNPTFTEEQNKKILATSVGKIIFNEIIPDSFAYINEPTQENLERKTPNRYFIDPTTLGEGGLKEYFENEELIEPFNKKFLGNIIAEVFNRFSITDTSMMLDRMKDLGFKFSSKAGITVGVADIVVLPDKQQILDEHEKLVDRITKQFNRGLITEEERYNAVVEIWTDAKDQIQGELMQSLDKTNPIFMMSDSGARGNASNFTQLAGMRGLMAAPSGKIIELPITSSFREGLTVLEYFISTHGARKGLADTALKTADSGYLTRRLVDVAQDVIVREEDCGTDRGLLVSDIKEGTEMIEPFIERIEGRYSKETIRHPETDEVIIRPDELITPEIAKKITDAGIEQMYIRSAFTCNARHGVCEKCYGKNLATGEKVEVGEAVGTIAAQSIGEPGTQLTMRTFHTGGVAGSDITQGLPRIQEIFEARNPKGQAVITEIEGVVEDIKLAKDRQQEIVVKGANETRSYLASGTSRIIVEIGQPVQRGEVLTEGSIEPKNYLSVAGLNATESYLLKEVQKVYRMQGVEIDDKHVEVMVRQMLRKVRIIEAGDTKLLPGSLVDIHNFTDANREAFKHRKRPATAKPVLLGITKASLETESFLSAASFQETTRVLTDAAIKGKRDDLLGLKENVIIGKLIPAGTGMRRYSDVKYEKTAKPVAEVESQTEVTE.

Positions 60, 62, 75, and 78 each coordinate Zn(2+). D449, D451, and D453 together coordinate Mg(2+). C822, C896, C903, and C906 together coordinate Zn(2+).

It belongs to the RNA polymerase beta' chain family. As to quaternary structure, the RNAP catalytic core consists of 2 alpha, 1 beta, 1 beta' and 1 omega subunit. When a sigma factor is associated with the core the holoenzyme is formed, which can initiate transcription. Mg(2+) is required as a cofactor. The cofactor is Zn(2+).

The catalysed reaction is RNA(n) + a ribonucleoside 5'-triphosphate = RNA(n+1) + diphosphate. Its function is as follows. DNA-dependent RNA polymerase catalyzes the transcription of DNA into RNA using the four ribonucleoside triphosphates as substrates. In Staphylococcus aureus (strain MRSA252), this protein is DNA-directed RNA polymerase subunit beta'.